A 326-amino-acid chain; its full sequence is UDP-3-O-acylglucosamine N-acyltransferase (326 aa).

H225 acts as the Proton acceptor in catalysis.

Belongs to the transferase hexapeptide repeat family. LpxD subfamily. Homotrimer.

The catalysed reaction is a UDP-3-O-[(3R)-3-hydroxyacyl]-alpha-D-glucosamine + a (3R)-hydroxyacyl-[ACP] = a UDP-2-N,3-O-bis[(3R)-3-hydroxyacyl]-alpha-D-glucosamine + holo-[ACP] + H(+). Its pathway is bacterial outer membrane biogenesis; LPS lipid A biosynthesis. Functionally, catalyzes the N-acylation of UDP-3-O-acylglucosamine using 3-hydroxyacyl-ACP as the acyl donor. Is involved in the biosynthesis of lipid A, a phosphorylated glycolipid that anchors the lipopolysaccharide to the outer membrane of the cell. The protein is UDP-3-O-acylglucosamine N-acyltransferase of Acidovorax ebreus (strain TPSY) (Diaphorobacter sp. (strain TPSY)).